A 246-amino-acid chain; its full sequence is Uridylate kinase (246 aa).

Position 13-16 (13-16) interacts with ATP; sequence KLSG. Gly54 is a binding site for UMP. Residues Gly55 and Arg59 each contribute to the ATP site. UMP is bound by residues Asp74 and 135–142; that span reads AGMPYFST. Residues Asn163, Tyr169, and Asp172 each contribute to the ATP site.

This sequence belongs to the UMP kinase family. Homohexamer.

Its subcellular location is the cytoplasm. The catalysed reaction is UMP + ATP = UDP + ADP. It functions in the pathway pyrimidine metabolism; CTP biosynthesis via de novo pathway; UDP from UMP (UMPK route): step 1/1. Inhibited by UTP. In terms of biological role, catalyzes the reversible phosphorylation of UMP to UDP. The chain is Uridylate kinase from Bifidobacterium longum (strain NCC 2705).